Reading from the N-terminus, the 86-residue chain is Putative antitoxin VapB5 (86 aa).

Belongs to the phD/YefM antitoxin family. As to quaternary structure, forms a complex with VapC5.

Functionally, probable antitoxin component of a probable type II toxin-antitoxin (TA) system. The cognate toxin is VapC5. This chain is Putative antitoxin VapB5 (vapB5), found in Mycobacterium tuberculosis (strain CDC 1551 / Oshkosh).